Here is a 261-residue protein sequence, read N- to C-terminus: Zinc finger protein 664 (261 aa).

9 consecutive C2H2-type zinc fingers follow at residues 3–25, 31–53, 59–81, 87–109, 115–137, 143–165, 171–193, 199–221, and 227–249; these read YKCPMCREFFSERADLFMHQKIH, HKCDKCDKGFFHISELHIHWRDH, YKCDDCGKDFSTTTKLNRHKKIH, YKCYECGKAFNWSSHLQIHMRVH, YVCSECGRGFSNSSNLCMHQRVH, FKCEECGKAFRHTSSLCMHQRVH, YKCYECGKAFSQSSSLCIHQRVH, YRCCGCGKAFSQSSSLCIHQRVH, and FKCDECGKAFSQSTSLCIHQRVH. Lys-257 is covalently cross-linked (Glycyl lysine isopeptide (Lys-Gly) (interchain with G-Cter in SUMO2)).

It belongs to the krueppel C2H2-type zinc-finger protein family.

It is found in the nucleus. Its function is as follows. May be involved in transcriptional regulation. This Homo sapiens (Human) protein is Zinc finger protein 664.